Here is a 413-residue protein sequence, read N- to C-terminus: Aminopeptidase PepS (413 aa).

Residues Glu-253, Glu-319, Glu-343, His-348, His-381, and Asp-383 each coordinate a divalent metal cation.

The protein belongs to the peptidase M29 family. In terms of assembly, monomer. The cofactor is Co(2+). Requires Zn(2+) as cofactor. Mg(2+) serves as cofactor.

Its function is as follows. Exhibits a high specificity towards peptides possessing arginine or aromatic amino acids at the N-terminus. Could be involved both in bacterial growth by supplying amino acids. The polypeptide is Aminopeptidase PepS (pepS) (Streptococcus thermophilus).